The primary structure comprises 65 residues: Large ribosomal subunit protein bL35 (65 aa).

This sequence belongs to the bacterial ribosomal protein bL35 family.

In Parabacteroides distasonis (strain ATCC 8503 / DSM 20701 / CIP 104284 / JCM 5825 / NCTC 11152), this protein is Large ribosomal subunit protein bL35.